The chain runs to 479 residues: Cyclin-dependent kinase F-1 (479 aa).

Positions 24–419 constitute a Protein kinase domain; sequence YEVLGRAGSG…AADLLNDPYF (396 aa). ATP contacts are provided by residues 30–38 and Lys-53; that span reads AGSGAYADV. Asp-146 serves as the catalytic Proton acceptor. Phosphothreonine is present on Thr-291. A disordered region spans residues 429–479; it reads EGLQVPESKDEDDDSTEEWANFRGGDSDSDFDEFGSMDVTKTDKGFSIRFS. A compositionally biased stretch (basic and acidic residues) spans 468–479; it reads TKTDKGFSIRFS.

Belongs to the protein kinase superfamily. CMGC Ser/Thr protein kinase family. CDC2/CDKX subfamily.

The catalysed reaction is L-seryl-[protein] + ATP = O-phospho-L-seryl-[protein] + ADP + H(+). It catalyses the reaction L-threonyl-[protein] + ATP = O-phospho-L-threonyl-[protein] + ADP + H(+). It carries out the reaction [DNA-directed RNA polymerase] + ATP = phospho-[DNA-directed RNA polymerase] + ADP + H(+). This Oryza sativa subsp. japonica (Rice) protein is Cyclin-dependent kinase F-1 (CDKF-1).